An 837-amino-acid chain; its full sequence is MPNSAGVEVARISVKVSPNTKEFRRELKTDLEKIERELSADVPVNADLNAAQAKADFKRLMMQLKTEAARGVNIPVDVNVDKDTKGGFLSRLLGGKKGLSSLGDDAAKASSQVQHLGKSFLDLTRTAWIGVGIVAIAAPLVGLVAGLLAGLPSLLSAFGAGAGVVALGMDGIKAAAETMMPALEAAKTAVSSTFQTGLTPVFQQLGGLLTTLTPNLQNVATGIVNIAKGFTDVVSQGPGLQQLQNILDRTGEFFTGLGPVISTGTQAFLTLSNAGANAFGHLLAPLQEFANGFNDMVNRVTSNGVFDGAMQGLSQTLGSILNLFNRLMESGLQAMGQLGGPLSTLVNGIGDLFIALMPALTSVSSLLGNVLGTLGTQLAPIITALTPAFTTLADTLGTMLTGALQALGPVLTVVAETLGTALTTALQAIQPMLPTLVDSFKQLSETLVTSLGPYLPQIGEAFGQIVGAVIQLAPTIISSLIPAFQTLIPAIAQLAPSLVQIVQAFTKLMPVIVPVVQIVINLAAAVVQAGASIASFLIGGISRLVGVLADCVGAVAEWVGSWSSGVQQVSDFVGQLPGKIKSWFDDAGSWLIEAGKNVVQGLINGIGSMISSAVSKAKELASSVKNAVTGFLGIHSPSRVFAEIGQFTAEGFGNGFEEGFQPVIEKAKALAAELSQAMESGVDPSGILAGISTKELKQYSAALEQERKRIQVEKNAIPKEDKAGRAALQAQLDQIKAQKDILAYQRDRIKNEEDYVGAAGDDPLVKAASGLMNAPVDFAKATGKQFLTDLGISGDGAISKAITEGIQYIFQIGSVDEALSIKDREESKNALSVVGRA.

The protein is Minor tail protein Gp26 (26) of Mycobacterium phage D29 (Mycobacteriophage D29).